The sequence spans 212 residues: Probable nicotinate-nucleotide adenylyltransferase (212 aa).

It belongs to the NadD family.

The enzyme catalyses nicotinate beta-D-ribonucleotide + ATP + H(+) = deamido-NAD(+) + diphosphate. It participates in cofactor biosynthesis; NAD(+) biosynthesis; deamido-NAD(+) from nicotinate D-ribonucleotide: step 1/1. In terms of biological role, catalyzes the reversible adenylation of nicotinate mononucleotide (NaMN) to nicotinic acid adenine dinucleotide (NaAD). This chain is Probable nicotinate-nucleotide adenylyltransferase, found in Chromobacterium violaceum (strain ATCC 12472 / DSM 30191 / JCM 1249 / CCUG 213 / NBRC 12614 / NCIMB 9131 / NCTC 9757 / MK).